We begin with the raw amino-acid sequence, 237 residues long: Uridylate kinase (237 aa).

Residue 10–13 coordinates ATP; the sequence is KFSG. Residues 18–23 form an involved in allosteric activation by GTP region; the sequence is GDSGFG. Gly-52 is a binding site for UMP. 2 residues coordinate ATP: Gly-53 and Arg-57. Residues Asp-73 and 134 to 141 contribute to the UMP site; that span reads TGNPFFTT. ATP is bound by residues Thr-161, Tyr-167, and Asp-170.

This sequence belongs to the UMP kinase family. In terms of assembly, homohexamer.

It localises to the cytoplasm. The catalysed reaction is UMP + ATP = UDP + ADP. It functions in the pathway pyrimidine metabolism; CTP biosynthesis via de novo pathway; UDP from UMP (UMPK route): step 1/1. Allosterically activated by GTP. Inhibited by UTP. Its function is as follows. Catalyzes the reversible phosphorylation of UMP to UDP. The sequence is that of Uridylate kinase from Campylobacter hominis (strain ATCC BAA-381 / DSM 21671 / CCUG 45161 / LMG 19568 / NCTC 13146 / CH001A).